Reading from the N-terminus, the 331-residue chain is Peroxidase 49 (331 aa).

The first 22 residues, 1–22 (MARLTSFLLLLSLICFVPLCLC), serve as a signal peptide directing secretion. Intrachain disulfides connect C39/C119, C72/C77, C125/C326, and C204/C236. H70 serves as the catalytic Proton acceptor. Residues D71, V74, G76, D78, and S80 each contribute to the Ca(2+) site. Position 167 (P167) interacts with substrate. N-linked (GlcNAc...) asparagine glycosylation occurs at N170. Residue H197 coordinates heme b. T198 is a Ca(2+) binding site. N213 carries an N-linked (GlcNAc...) asparagine glycan. The Ca(2+) site is built by D249, S252, and D257.

The protein belongs to the peroxidase family. Classical plant (class III) peroxidase subfamily. It depends on heme b as a cofactor. Ca(2+) is required as a cofactor.

The protein localises to the secreted. The enzyme catalyses 2 a phenolic donor + H2O2 = 2 a phenolic radical donor + 2 H2O. In terms of biological role, removal of H(2)O(2), oxidation of toxic reductants, biosynthesis and degradation of lignin, suberization, auxin catabolism, response to environmental stresses such as wounding, pathogen attack and oxidative stress. These functions might be dependent on each isozyme/isoform in each plant tissue. This chain is Peroxidase 49 (PER49), found in Arabidopsis thaliana (Mouse-ear cress).